Here is a 174-residue protein sequence, read N- to C-terminus: Ribosome maturation factor RimP (174 aa).

Belongs to the RimP family.

The protein localises to the cytoplasm. Its function is as follows. Required for maturation of 30S ribosomal subunits. The chain is Ribosome maturation factor RimP from Acinetobacter baumannii (strain AB307-0294).